The sequence spans 353 residues: N-methyltransferase (353 aa).

S-adenosyl-L-homocysteine-binding residues include Ser-171, Ala-195, Asp-218, Asp-238, and Lys-252. S-adenosyl-L-methionine is bound at residue Asp-218.

This sequence belongs to the class I-like SAM-binding methyltransferase superfamily. Cation-independent O-methyltransferase family. In terms of assembly, homodimer. Expressed at high levels in all tissues.

It carries out the reaction 3-methoxytyramine + S-adenosyl-L-methionine = N-methyl-3-methoxytyramine + S-adenosyl-L-homocysteine + H(+). The enzyme catalyses mescaline + S-adenosyl-L-methionine = N-methylmescaline + S-adenosyl-L-homocysteine + H(+). The catalysed reaction is tyramine + S-adenosyl-L-methionine = N-methyltyramine + S-adenosyl-L-homocysteine + H(+). It catalyses the reaction 4-hydroxy-3,5-dimethoxyphenethylamine + S-adenosyl-L-methionine = N-methyl-4-hydroxy-3,5-dimethoxyphenethylamine + S-adenosyl-L-homocysteine + H(+). Its pathway is aromatic compound metabolism. The protein operates within alkaloid biosynthesis. N-methyltransferase participating in the biosynthesis of natural products derived from phenylethylamine, including mescaline, a natural hallucinogen potentially used in psychotherapeutic treatments. Catalyzes the N-methylation of many substrates, including 3-methoxytyramine, 5-hydroxy-3,4-dimethoxyphenethylamine, 4-hydroxy-3,5-dimethoxyphenethylamine, tyramine and mescaline. The chain is N-methyltransferase from Lophophora williamsii (Peyote).